An 824-amino-acid polypeptide reads, in one-letter code: MGNTATKEARPPAGTSGRNGHGRGPSGGAVALGGLGRFHNQPESSQPGVSSRHFRGSRPDLSFLGIGPAVDRDSFVERKETKQERDARRLARERAARIKERERSMKEEHVDGGYLVTQGVYTGVEDFNKAVVRQLMIERRLAPFWKGLEEFSDSWTEHQLMAAARGLLIPAPDEIPPELEYKLTPPRLPEDQDLPDQNLNNLTVPITSRSQSYNSDLSSTTHPVSPSISLQPQLSPGVSGSPGAHLFRGRAKTLASLTASSKHSSPGEMSPRELQLPKDPFVNGQPIEAYLYKNPIECPICFLYYPPYLNRTRCCDQWICSECFVQIKRADPHLPEHEQRDPNSPSPDRPDGQLISEPAGCPFCVQPDFGVSYTPPPFRRGLSYIPSNSLDKTLLSPASSTSSLVSGNANSHSITTRRRATSLSANSPAVIMTDKIRPDWAHKLQTARAQAARRSAAATALHAAAYINAMNNPIETRGMGSSSRRMLRRTTGHGSDNSTNQAGSVALLAERRAIAADRENDSPAESTSNLAPARASSRRNRMDELEEMMMMEAIRLSLASEEERRKKEEKEAKKEAKRREREAKRAEKLARKNGLYSNNPSSVALDATGSNTAVRTGRELSPPVSVLEPSSDKGKAVDRPGSLSEPPHTDTQLPGLPKLSLKTSDDDLSSIFAPSSAAAAKRSHLRHISSSSSSNSSLVGSACGELIGSGSTPNFNSAIEPVLNFRSLDAVIDDENTNGSRHEHLEGATKLKKTQQPSNDNAISPRPNRDLGLGVEPGSVQQATVPPQGDSSINKDENDVRDKELQSHTAETMHGGNTNLETVG.

Disordered regions lie at residues 1–66, 183–202, 210–242, 256–278, 397–421, 473–503, 517–539, 561–662, and 735–824; these read MGNT…FLGI, LTPP…LNNL, SQSY…SGSP, SLTA…QLPK, PASS…RRAT, PIET…NQAG, DREN…SSRR, EEER…LSLK, and ENTN…ETVG. Residues 17 to 36 are compositionally biased toward gly residues; the sequence is GRNGHGRGPSGGAVALGGLG. The segment covering 210 to 222 has biased composition (polar residues); it reads SQSYNSDLSSTTH. The span at 223-236 shows a compositional bias: low complexity; the sequence is PVSPSISLQPQLSP. A compositionally biased stretch (low complexity) spans 397 to 406; the sequence is PASSTSSLVS. Residues 493–503 are compositionally biased toward polar residues; sequence HGSDNSTNQAG. Residues 561–590 show a composition bias toward basic and acidic residues; sequence EEERRKKEEKEAKKEAKRREREAKRAEKLA. Over residues 595–614 the composition is skewed to polar residues; sequence LYSNNPSSVALDATGSNTAV. Low complexity predominate over residues 619–629; sequence ELSPPVSVLEP. The segment covering 740-749 has biased composition (basic and acidic residues); the sequence is SRHEHLEGAT. Positions 779 to 792 are enriched in polar residues; sequence SVQQATVPPQGDSS. Basic and acidic residues predominate over residues 793 to 806; sequence INKDENDVRDKELQ. Residues 807–824 show a composition bias toward polar residues; sequence SHTAETMHGGNTNLETVG.

Belongs to the SIP5 family.

The protein localises to the cytoplasm. May negatively regulate the SNF1 kinase. This chain is Protein SIP5 (SIP5), found in Ajellomyces capsulatus (strain NAm1 / WU24) (Darling's disease fungus).